The sequence spans 146 residues: Hemoglobin subunit beta (146 aa).

Valine 1 carries the post-translational modification N-acetylvaline. The 145-residue stretch at 2-146 (HLTGEEKAAV…VANALAHKYH (145 aa)) folds into the Globin domain. Position 12 is a phosphothreonine (threonine 12). Serine 44 is modified (phosphoserine). Lysine 59 bears the N6-acetyllysine mark. Histidine 63 lines the heme b pocket. Position 82 is an N6-acetyllysine (lysine 82). Histidine 92 lines the heme b pocket. Residue cysteine 93 is modified to S-nitrosocysteine. The residue at position 144 (lysine 144) is an N6-acetyllysine.

It belongs to the globin family. Heterotetramer of two alpha chains and two beta chains. As to expression, red blood cells.

Functionally, involved in oxygen transport from the lung to the various peripheral tissues. The polypeptide is Hemoglobin subunit beta (HBB) (Mustela putorius furo (European domestic ferret)).